We begin with the raw amino-acid sequence, 377 residues long: Carbonic anhydrase 1 (377 aa).

Residues 1–20 form the signal peptide; it reads MARTGALLLVALALAGCAQA. The 281-residue stretch at 38–318 folds into the Alpha-carbonic anhydrase domain; that stretch reads DHWDHGLNGE…HHHRRLLHNH (281 aa). 3 disulfide bridges follow: cysteine 61-cysteine 264, cysteine 194-cysteine 198, and cysteine 296-cysteine 351. N-linked (GlcNAc...) asparagine glycosylation is present at asparagine 101. Histidine 112 functions as the Proton acceptor in the catalytic mechanism. Asparagine 135 carries an N-linked (GlcNAc...) asparagine glycan. Residues histidine 163, histidine 165, and histidine 182 each coordinate Zn(2+). Substrate is bound by residues threonine 260 and 260 to 261; that span reads TT. N-linked (GlcNAc...) asparagine glycosylation is present at asparagine 297.

This sequence belongs to the alpha-carbonic anhydrase family. As to quaternary structure, tetramer of two large and two small subunits linked by two disulfide bonds. Zn(2+) is required as a cofactor.

It localises to the periplasm. It catalyses the reaction hydrogencarbonate + H(+) = CO2 + H2O. Its function is as follows. Reversible hydration of carbon dioxide. The sequence is that of Carbonic anhydrase 1 (CAH1) from Chlamydomonas reinhardtii (Chlamydomonas smithii).